The primary structure comprises 522 residues: MSFSRSAADAADTLPDLAATLGAPAERAFVTLGDAFHTRLPAAPLAAPYVVGFSDDVAQLLDLPPAIAAQPGFAELFAGNPTRDWPAHAMPYASVYSGHQFGVWAGQLGDGRALTIGELPGTDGRRYELQLKGGGRTPYSRMGDGRAVLRSSIREFLCSEAMHHLGIPTTRALTVIGSDQPVVREEIETAAVVTRVSESFVRFGHFEHFFSNDRPDLLRQLADHVIDRFYPACRDADDPYLALLEAATLRTADLVAQWQAVGFCHGVMNTDNMSILGVTIDYGPFGFVDAFDANHICNHSDTSGRYAYRMQPRIAHWNCYCLAQALLPLIGLQHGIADDDARAERAVDDAQAVLAKFPERFGPALERAMRAKLGLALEREGDAELANKLLETMHASHADFTLTFRRLAQISKHDASRDAPVRDLFIDREAFDAWANLYRARLSEETRDDAARAVAMNRANPKYVLRNHLAEVAIRRAKEKDFSEVERLAQILRRPFDEQPEHEAYAALPPDWAGSLEVSCSS.

ATP-binding residues include Gly109, Gly111, Arg112, Lys132, Asp144, Gly145, Arg195, and Arg202. Asp271 acts as the Proton acceptor in catalysis. The Mg(2+) site is built by Asn272 and Asp281. Asp281 serves as a coordination point for ATP.

It belongs to the SELO family. The cofactor is Mg(2+). Mn(2+) serves as cofactor.

It catalyses the reaction L-seryl-[protein] + ATP = 3-O-(5'-adenylyl)-L-seryl-[protein] + diphosphate. The enzyme catalyses L-threonyl-[protein] + ATP = 3-O-(5'-adenylyl)-L-threonyl-[protein] + diphosphate. The catalysed reaction is L-tyrosyl-[protein] + ATP = O-(5'-adenylyl)-L-tyrosyl-[protein] + diphosphate. It carries out the reaction L-histidyl-[protein] + UTP = N(tele)-(5'-uridylyl)-L-histidyl-[protein] + diphosphate. It catalyses the reaction L-seryl-[protein] + UTP = O-(5'-uridylyl)-L-seryl-[protein] + diphosphate. The enzyme catalyses L-tyrosyl-[protein] + UTP = O-(5'-uridylyl)-L-tyrosyl-[protein] + diphosphate. Functionally, nucleotidyltransferase involved in the post-translational modification of proteins. It can catalyze the addition of adenosine monophosphate (AMP) or uridine monophosphate (UMP) to a protein, resulting in modifications known as AMPylation and UMPylation. The sequence is that of Protein nucleotidyltransferase YdiU from Burkholderia orbicola (strain MC0-3).